The following is a 305-amino-acid chain: Transcriptional activator protein PfeR (305 aa).

Residues 79-192 form the Response regulatory domain; that stretch reads RLLLVEDDPR…ELDARTDALL (114 aa). A 4-aspartylphosphate modification is found at D128. Positions 200–301 form a DNA-binding region, ompR/PhoB-type; that stretch reads LPLAQRRDTR…VRGQGYLLVE (102 aa).

In terms of processing, phosphorylated by PfeS.

The protein resides in the cytoplasm. Functionally, member of the two-component regulatory system PfeR/PfeS. Activates expression of the ferric enterobactin receptor. The polypeptide is Transcriptional activator protein PfeR (pfeR) (Pseudomonas aeruginosa (strain ATCC 15692 / DSM 22644 / CIP 104116 / JCM 14847 / LMG 12228 / 1C / PRS 101 / PAO1)).